A 287-amino-acid polypeptide reads, in one-letter code: METTKKLFALLCLFVTMNQAISVSDPDDMETFCMKSSRNTTSNTTYNKNLNTLLSTLSNQSSFANYYNLTTGLASDTVHGMFLCTGDVNRTTCNACVKNATIEIAKNCTNHREAIIYNVDCMVRYSDKFFLTTLETNPSYWWSSNDLIPKSFGKFGQRLSDKMGEVIVRSSLLSSSFTPYYLMDTTRFDNLYDLESIVQCTPDLDPRNCTTCLKLALQELTECCGNQVWAFIYTPNCMVSFDTYNSSLPPLPPPSRSGSFSHRGNNKLLGGMVLAVSVSVFAFLSLV.

The N-terminal stretch at 1-20 is a signal peptide; it reads METTKKLFALLCLFVTMNQA. The Extracellular portion of the chain corresponds to 21–267; it reads ISVSDPDDME…GSFSHRGNNK (247 aa). Gnk2-homologous domains are found at residues 28-130 and 135-246; these read DMET…DKFF and ETNP…TYNS. Residues asparagine 39, asparagine 43, asparagine 59, asparagine 68, asparagine 89, asparagine 99, asparagine 107, asparagine 208, and asparagine 245 are each glycosylated (N-linked (GlcNAc...) asparagine). The chain crosses the membrane as a helical span at residues 268–286; the sequence is LLGGMVLAVSVSVFAFLSL. Residue valine 287 is a topological domain, cytoplasmic.

It belongs to the cysteine-rich repeat secretory protein family.

Its subcellular location is the membrane. This chain is Cysteine-rich repeat secretory protein 58 (CRRSP58), found in Arabidopsis thaliana (Mouse-ear cress).